A 250-amino-acid chain; its full sequence is Ubiquinone/menaquinone biosynthesis C-methyltransferase UbiE (250 aa).

S-adenosyl-L-methionine-binding positions include Thr-73, Asp-94, Asn-122 to Ala-123, and Ser-139.

Belongs to the class I-like SAM-binding methyltransferase superfamily. MenG/UbiE family.

The enzyme catalyses a 2-demethylmenaquinol + S-adenosyl-L-methionine = a menaquinol + S-adenosyl-L-homocysteine + H(+). The catalysed reaction is a 2-methoxy-6-(all-trans-polyprenyl)benzene-1,4-diol + S-adenosyl-L-methionine = a 5-methoxy-2-methyl-3-(all-trans-polyprenyl)benzene-1,4-diol + S-adenosyl-L-homocysteine + H(+). The protein operates within quinol/quinone metabolism; menaquinone biosynthesis; menaquinol from 1,4-dihydroxy-2-naphthoate: step 2/2. It participates in cofactor biosynthesis; ubiquinone biosynthesis. Methyltransferase required for the conversion of demethylmenaquinol (DMKH2) to menaquinol (MKH2) and the conversion of 2-polyprenyl-6-methoxy-1,4-benzoquinol (DDMQH2) to 2-polyprenyl-3-methyl-6-methoxy-1,4-benzoquinol (DMQH2). This chain is Ubiquinone/menaquinone biosynthesis C-methyltransferase UbiE, found in Francisella tularensis subsp. holarctica (strain FTNF002-00 / FTA).